A 299-amino-acid chain; its full sequence is ATP phosphoribosyltransferase (299 aa).

It belongs to the ATP phosphoribosyltransferase family. Long subfamily. Requires Mg(2+) as cofactor.

The protein localises to the cytoplasm. It carries out the reaction 1-(5-phospho-beta-D-ribosyl)-ATP + diphosphate = 5-phospho-alpha-D-ribose 1-diphosphate + ATP. Its pathway is amino-acid biosynthesis; L-histidine biosynthesis; L-histidine from 5-phospho-alpha-D-ribose 1-diphosphate: step 1/9. With respect to regulation, feedback inhibited by histidine. Catalyzes the condensation of ATP and 5-phosphoribose 1-diphosphate to form N'-(5'-phosphoribosyl)-ATP (PR-ATP). Has a crucial role in the pathway because the rate of histidine biosynthesis seems to be controlled primarily by regulation of HisG enzymatic activity. The chain is ATP phosphoribosyltransferase from Campylobacter jejuni subsp. jejuni serotype O:2 (strain ATCC 700819 / NCTC 11168).